Here is a 436-residue protein sequence, read N- to C-terminus: ATP-dependent protease ATPase subunit HslU (436 aa).

ATP is bound by residues Ile19, 61-65 (GVGKT), Asp249, Glu314, and Arg386.

The protein belongs to the ClpX chaperone family. HslU subfamily. A double ring-shaped homohexamer of HslV is capped on each side by a ring-shaped HslU homohexamer. The assembly of the HslU/HslV complex is dependent on binding of ATP.

The protein resides in the cytoplasm. Functionally, ATPase subunit of a proteasome-like degradation complex; this subunit has chaperone activity. The binding of ATP and its subsequent hydrolysis by HslU are essential for unfolding of protein substrates subsequently hydrolyzed by HslV. HslU recognizes the N-terminal part of its protein substrates and unfolds these before they are guided to HslV for hydrolysis. This Bartonella henselae (strain ATCC 49882 / DSM 28221 / CCUG 30454 / Houston 1) (Rochalimaea henselae) protein is ATP-dependent protease ATPase subunit HslU.